Reading from the N-terminus, the 963-residue chain is Ubiquitin carboxyl-terminal hydrolase 11 (963 aa).

The interval Val64–Glu93 is disordered. Over residues Thr65–Leu75 the composition is skewed to basic and acidic residues. One can recognise a DUSP domain in the interval Pro76 to Ile184. The residue at position 245 (Lys245) is an N6-acetyllysine. One can recognise a USP domain in the interval Cys309–Gln930. Catalysis depends on Cys318, which acts as the Nucleophile. 2 disordered regions span residues Thr644 to Thr691 and Leu716 to Glu735. Ser648 is subject to Phosphoserine. Positions Asp649–Asp665 are enriched in acidic residues. Over residues Phe717 to Thr731 the composition is skewed to polar residues. Phosphoserine is present on Ser733. The active-site Proton acceptor is the His888. Over residues Ser938–Ser957 the composition is skewed to low complexity. Residues Ser938–Asn963 form a disordered region. Ser948 is subject to Phosphoserine.

Belongs to the peptidase C19 family. Monomer. Associated component of the Polycomb group (PcG) multiprotein PRC1-like complex. Interacts with RANBP9/RANBPM. Interacts with BRCA2. Interacts with CHUK/IKKA. Interacts with NFKBIA. Interacts with SPRY3, RAE1, MYCBP2/PAM, and KCTD6. In terms of assembly, (Microbial infection) Interacts with papilloma virus protein 16E7.

The protein resides in the nucleus. Its subcellular location is the cytoplasm. It localises to the chromosome. The catalysed reaction is Thiol-dependent hydrolysis of ester, thioester, amide, peptide and isopeptide bonds formed by the C-terminal Gly of ubiquitin (a 76-residue protein attached to proteins as an intracellular targeting signal).. In terms of biological role, protease that can remove conjugated ubiquitin from target proteins and polyubiquitin chains. Inhibits the degradation of target proteins by the proteasome. Cleaves preferentially 'Lys-6' and 'Lys-63'-linked ubiquitin chains. Has lower activity with 'Lys-11' and 'Lys-33'-linked ubiquitin chains, and extremely low activity with 'Lys-27', 'Lys-29' and 'Lys-48'-linked ubiquitin chains (in vitro). Plays a role in the regulation of pathways leading to NF-kappa-B activation. Plays a role in the regulation of DNA repair after double-stranded DNA breaks. Acts as a chromatin regulator via its association with the Polycomb group (PcG) multiprotein PRC1-like complex; may act by deubiquitinating components of the PRC1-like complex. Promotes cell proliferation by deubiquitinating phosphorylated E2F1. The chain is Ubiquitin carboxyl-terminal hydrolase 11 (USP11) from Homo sapiens (Human).